Here is a 517-residue protein sequence, read N- to C-terminus: RNA-binding region-containing protein 3 (517 aa).

The segment at 1 to 26 (MAAPEQPLAISRGCTSSSSLSPPRGD) is disordered. The segment at 1–257 (MAAPEQPLAI…STDDEDRQRM (257 aa)) is necessary for interaction with PDCD7. Residue S21 is modified to Phosphoserine. An RRM 1 domain is found at 27–102 (RTLLVRHLPA…HTLVVEFAKE (76 aa)). Disordered regions lie at residues 106 to 130 (VHSPCPTSGSEKKKRSDDPVEDDKE) and 213 to 254 (MPLH…DEDR). Position 108 is a phosphoserine (S108). The span at 115–130 (SEKKKRSDDPVEDDKE) shows a compositional bias: basic and acidic residues. The segment at 211-380 (DYMPLHAPLP…LDITEEIKED (170 aa)) is necessary for binding to m(7)G-capped U12 snRNA. Residues 217 to 230 (APLPPTSPQPPEEP) show a composition bias toward pro residues. Acidic residues predominate over residues 231-252 (PLPDEDEELSSEESEYESTDDE). One can recognise an RRM 2 domain in the interval 420-503 (CRIYVKNLAK…KPMVVQFARS (84 aa)).

In terms of assembly, component of the U11/U12 snRNPs that are part of the U12-type spliceosome. Found in a complex with m(7)G-capped U12 snRNA. Interacts with PDCD7. In terms of tissue distribution, highly expressed in pancreas and kidney. Detected at lower levels in heart, brain, placenta, lung, liver, spleen, thymus, prostate, testis, ovary, small intestine, colon and leukocytes.

It is found in the nucleus. Its function is as follows. Participates in pre-mRNA U12-dependent splicing, performed by the minor spliceosome which removes U12-type introns. U12-type introns comprises less than 1% of all non-coding sequences. Binds to the 3'-stem-loop of m(7)G-capped U12 snRNA. The chain is RNA-binding region-containing protein 3 (RNPC3) from Homo sapiens (Human).